Reading from the N-terminus, the 133-residue chain is Phosphoribosyl-AMP cyclohydrolase (133 aa).

A Mg(2+)-binding site is contributed by Asp-90. Cys-91 serves as a coordination point for Zn(2+). Residues Asp-92 and Asp-94 each contribute to the Mg(2+) site. Cys-107 and Cys-114 together coordinate Zn(2+).

Belongs to the PRA-CH family. In terms of assembly, homodimer. The cofactor is Mg(2+). Requires Zn(2+) as cofactor.

The protein resides in the cytoplasm. The enzyme catalyses 1-(5-phospho-beta-D-ribosyl)-5'-AMP + H2O = 1-(5-phospho-beta-D-ribosyl)-5-[(5-phospho-beta-D-ribosylamino)methylideneamino]imidazole-4-carboxamide. The protein operates within amino-acid biosynthesis; L-histidine biosynthesis; L-histidine from 5-phospho-alpha-D-ribose 1-diphosphate: step 3/9. In terms of biological role, catalyzes the hydrolysis of the adenine ring of phosphoribosyl-AMP. The protein is Phosphoribosyl-AMP cyclohydrolase of Streptomyces avermitilis (strain ATCC 31267 / DSM 46492 / JCM 5070 / NBRC 14893 / NCIMB 12804 / NRRL 8165 / MA-4680).